A 372-amino-acid polypeptide reads, in one-letter code: Tyrosine--tRNA ligase (372 aa).

L-tyrosine-binding residues include Tyr-37, Tyr-169, Gln-173, Asp-176, and Gln-191. Positions 246–250 (KMSKS) match the 'KMSKS' region motif. Residue Lys-249 coordinates ATP.

This sequence belongs to the class-I aminoacyl-tRNA synthetase family. TyrS type 4 subfamily. Homodimer.

It is found in the cytoplasm. The enzyme catalyses tRNA(Tyr) + L-tyrosine + ATP = L-tyrosyl-tRNA(Tyr) + AMP + diphosphate + H(+). Its function is as follows. Catalyzes the attachment of tyrosine to tRNA(Tyr) in a two-step reaction: tyrosine is first activated by ATP to form Tyr-AMP and then transferred to the acceptor end of tRNA(Tyr). In Pyrobaculum arsenaticum (strain DSM 13514 / JCM 11321 / PZ6), this protein is Tyrosine--tRNA ligase.